A 516-amino-acid polypeptide reads, in one-letter code: 2-isopropylmalate synthase (516 aa).

Positions 8–270 constitute a Pyruvate carboxyltransferase domain; it reads IYIFDTTLRD…YTGIKTESIY (263 aa). The Mn(2+) site is built by Asp17, His205, His207, and Asn241. Positions 394-516 are regulatory domain; that stretch reads KLIYLNVVSG…DAGKIKSEYE (123 aa).

It belongs to the alpha-IPM synthase/homocitrate synthase family. LeuA type 1 subfamily. Homodimer. Mn(2+) serves as cofactor.

It localises to the cytoplasm. It carries out the reaction 3-methyl-2-oxobutanoate + acetyl-CoA + H2O = (2S)-2-isopropylmalate + CoA + H(+). It participates in amino-acid biosynthesis; L-leucine biosynthesis; L-leucine from 3-methyl-2-oxobutanoate: step 1/4. Catalyzes the condensation of the acetyl group of acetyl-CoA with 3-methyl-2-oxobutanoate (2-ketoisovalerate) to form 3-carboxy-3-hydroxy-4-methylpentanoate (2-isopropylmalate). This chain is 2-isopropylmalate synthase, found in Syntrophus aciditrophicus (strain SB).